Here is a 308-residue protein sequence, read N- to C-terminus: Ornithine carbamoyltransferase (308 aa).

Carbamoyl phosphate contacts are provided by residues 55–58, Gln-82, Arg-106, and 133–136; these read STRT and HPCQ. Residues Asn-164, Asp-227, and 231 to 232 contribute to the L-ornithine site; that span reads SM. Residues 267–268 and Arg-295 each bind carbamoyl phosphate; that span reads CL.

Belongs to the aspartate/ornithine carbamoyltransferase superfamily. OTCase family.

It is found in the cytoplasm. The catalysed reaction is carbamoyl phosphate + L-ornithine = L-citrulline + phosphate + H(+). It participates in amino-acid biosynthesis; L-arginine biosynthesis; L-arginine from L-ornithine and carbamoyl phosphate: step 1/3. In terms of biological role, reversibly catalyzes the transfer of the carbamoyl group from carbamoyl phosphate (CP) to the N(epsilon) atom of ornithine (ORN) to produce L-citrulline. The chain is Ornithine carbamoyltransferase from Prochlorococcus marinus (strain MIT 9312).